The following is a 31-amino-acid chain: TCLEIGEFCGKPMMVGSLCCSPGWCFFICVG.

3 cysteine pairs are disulfide-bonded: Cys2/Cys20, Cys9/Cys25, and Cys19/Cys29.

This sequence belongs to the conotoxin O1 superfamily. As to expression, expressed by the venom duct.

It is found in the secreted. In Conus pictus (Cone snail), this protein is Conotoxin pc6b.